The primary structure comprises 131 residues: UPF0102 protein YraN (131 aa).

Residues 1-19 (MATVPTRSGSPRQLTTKQT) are compositionally biased toward polar residues. The interval 1-21 (MATVPTRSGSPRQLTTKQTGD) is disordered.

The protein belongs to the UPF0102 family.

This Escherichia coli O45:K1 (strain S88 / ExPEC) protein is UPF0102 protein YraN.